Here is a 212-residue protein sequence, read N- to C-terminus: Outer-membrane lipoprotein carrier protein (212 aa).

An N-terminal signal peptide occupies residues 1-29 (MSSARRRALGFSFQALLLCAAGWHGAAQA).

This sequence belongs to the LolA family. In terms of assembly, monomer.

It localises to the periplasm. Functionally, participates in the translocation of lipoproteins from the inner membrane to the outer membrane. Only forms a complex with a lipoprotein if the residue after the N-terminal Cys is not an aspartate (The Asp acts as a targeting signal to indicate that the lipoprotein should stay in the inner membrane). This is Outer-membrane lipoprotein carrier protein from Leptothrix cholodnii (strain ATCC 51168 / LMG 8142 / SP-6) (Leptothrix discophora (strain SP-6)).